The following is a 214-amino-acid chain: Phosphoenolpyruvate guanylyltransferase (214 aa).

The phosphoenolpyruvate site is built by T148, G163, and S166.

It belongs to the CofC family.

It catalyses the reaction phosphoenolpyruvate + GTP + H(+) = enolpyruvoyl-2-diphospho-5'-guanosine + diphosphate. Its pathway is cofactor biosynthesis; coenzyme F420 biosynthesis. Functionally, guanylyltransferase that catalyzes the activation of phosphoenolpyruvate (PEP) as enolpyruvoyl-2-diphospho-5'-guanosine, via the condensation of PEP with GTP. It is involved in the biosynthesis of coenzyme F420, a hydride carrier cofactor. This Mycolicibacterium gilvum (strain PYR-GCK) (Mycobacterium gilvum (strain PYR-GCK)) protein is Phosphoenolpyruvate guanylyltransferase.